A 317-amino-acid chain; its full sequence is Olfactory receptor 1082 (317 aa).

At 1-26 (MESGNSTRRFSSFFLLGFTENPQLHF) the chain is on the extracellular side. Asn-5 carries N-linked (GlcNAc...) asparagine glycosylation. Residues 27–51 (LIFALFLSMYLVTVLGNLLIIMAII) traverse the membrane as a helical segment. Residues 52–58 (TQSHLHT) lie on the Cytoplasmic side of the membrane. Residues 59–80 (PMYFFLANLSFVDICFTSTTIP) traverse the membrane as a helical segment. Residues 81 to 101 (KMLVNIYTQSKSITYEDCISQ) lie on the Extracellular side of the membrane. Cysteines 98 and 190 form a disulfide. Residues 102 to 121 (MCVFLVFAELGNFLLAVMAY) form a helical membrane-spanning segment. The Cytoplasmic portion of the chain corresponds to 122 to 140 (DRYVAXCHPLCYTVIVNHR). The chain crosses the membrane as a helical span at residues 141–159 (LCILLLLLSWVISIFHAFI). At 160–197 (QSLIVLQLTFCGDVKIPHFFCELNQLSQLTCSDNFPSH) the chain is on the extracellular side. A helical membrane pass occupies residues 198-220 (LIMNLVPVMLAAISFSGILYSYF). The Cytoplasmic segment spans residues 221-237 (KIVSSIHSISTVQGKYK). A helical transmembrane segment spans residues 238–261 (AFSTCASHLSIVSLFYSTGLGVYV). The Extracellular segment spans residues 262–273 (SSAVVQSSHSAA). Residues 274–293 (SASVMYTVVTPMLNPFIYSL) traverse the membrane as a helical segment. Residues 294 to 317 (RNKDVKRALERLLEGNCKVHHWTG) are Cytoplasmic-facing.

The protein belongs to the G-protein coupled receptor 1 family. Olfactory epithelium.

Its subcellular location is the cell membrane. Functionally, odorant receptor. The protein is Olfactory receptor 1082 (Olr1082) of Rattus norvegicus (Rat).